Consider the following 572-residue polypeptide: Proline--tRNA ligase (572 aa).

Belongs to the class-II aminoacyl-tRNA synthetase family. ProS type 1 subfamily. In terms of assembly, homodimer.

The protein resides in the cytoplasm. It carries out the reaction tRNA(Pro) + L-proline + ATP = L-prolyl-tRNA(Pro) + AMP + diphosphate. Its function is as follows. Catalyzes the attachment of proline to tRNA(Pro) in a two-step reaction: proline is first activated by ATP to form Pro-AMP and then transferred to the acceptor end of tRNA(Pro). As ProRS can inadvertently accommodate and process non-cognate amino acids such as alanine and cysteine, to avoid such errors it has two additional distinct editing activities against alanine. One activity is designated as 'pretransfer' editing and involves the tRNA(Pro)-independent hydrolysis of activated Ala-AMP. The other activity is designated 'posttransfer' editing and involves deacylation of mischarged Ala-tRNA(Pro). The misacylated Cys-tRNA(Pro) is not edited by ProRS. The polypeptide is Proline--tRNA ligase (Salmonella schwarzengrund (strain CVM19633)).